The primary structure comprises 884 residues: DNA mismatch repair protein MutS (884 aa).

651–658 (GPNMSGKS) contacts ATP. A disordered region spans residues 843–884 (LRNQGKSQPAQKNCKKEPAPNRSPDPAVGDQLSLIPAPLFPD).

Belongs to the DNA mismatch repair MutS family.

In terms of biological role, this protein is involved in the repair of mismatches in DNA. It is possible that it carries out the mismatch recognition step. This protein has a weak ATPase activity. The sequence is that of DNA mismatch repair protein MutS from Synechococcus sp. (strain JA-2-3B'a(2-13)) (Cyanobacteria bacterium Yellowstone B-Prime).